The sequence spans 322 residues: Sideroflexin-1 (322 aa).

Ser2 carries the N-acetylserine modification. At 2–102 (SGELPPNINI…MSAQVPMNMT (101 aa)) the chain is on the mitochondrial matrix side. The chain crosses the membrane as a helical span at residues 103–120 (ITGCMMTFYRTTPAVLFW). Residues 121–146 (QWVNQSFNAVVNYTNRSGDAPLTVNE) lie on the Mitochondrial intermembrane side of the membrane. The chain crosses the membrane as a helical span at residues 147–167 (LGTAYVSATTGAVATALGLNA). Topologically, residues 168–174 (LTKRVSP) are mitochondrial matrix. Residues 175-195 (LVGRFVPFAAVAAANCINIPL) traverse the membrane as a helical segment. Over 196–228 (MRQRELKVGIPVTDENGNRLGESASAAKQAITQ) the chain is Mitochondrial intermembrane. The helical transmembrane segment at 229–249 (VVVSRILMAAPGMAIPPFIMN) threads the bilayer. Over 250–266 (TLEKKAFLKRFPWMSAP) the chain is Mitochondrial matrix. The chain crosses the membrane as a helical span at residues 267–287 (VQVGIVGFCLVFATPLCCALF). The Mitochondrial intermembrane segment spans residues 288-322 (PQKSSMSVTSLEAELQARIRETYPELRRVYFNKGL).

The protein belongs to the sideroflexin family.

It localises to the mitochondrion inner membrane. It catalyses the reaction L-serine(in) = L-serine(out). The catalysed reaction is L-alanine(in) = L-alanine(out). It carries out the reaction L-cysteine(in) = L-cysteine(out). In terms of biological role, amino acid transporter importing serine, an essential substrate of the mitochondrial branch of the one-carbon pathway, into mitochondria. Mitochondrial serine is then converted to glycine and formate, which exits to the cytosol where it is used to generate the charged folates that serve as one-carbon donors. May also transport other amino acids including alanine and cysteine. This is Sideroflexin-1 (SFXN1) from Ovis aries (Sheep).